Consider the following 298-residue polypeptide: Cytosolic Fe-S cluster assembly factor CFD1 (298 aa).

An ATP-binding site is contributed by 25–32; the sequence is GKGGVGKS. Residues Cys215 and Cys218 each coordinate [4Fe-4S] cluster.

This sequence belongs to the Mrp/NBP35 ATP-binding proteins family. NUBP2/CFD1 subfamily. As to quaternary structure, heterotetramer of 2 NBP35 and 2 CFD1 chains. Requires [4Fe-4S] cluster as cofactor.

The protein resides in the cytoplasm. Functionally, component of the cytosolic iron-sulfur (Fe/S) protein assembly (CIA) machinery. Required for maturation of extramitochondrial Fe-S proteins. The NBP35-CFD1 heterotetramer forms a Fe-S scaffold complex, mediating the de novo assembly of an Fe-S cluster and its transfer to target apoproteins. Required for biogenesis and export of both ribosomal subunits, which may reflect a role in assembly of the Fe/S clusters in RLI1, a protein which performs rRNA processing and ribosome export. The sequence is that of Cytosolic Fe-S cluster assembly factor CFD1 from Debaryomyces hansenii (strain ATCC 36239 / CBS 767 / BCRC 21394 / JCM 1990 / NBRC 0083 / IGC 2968) (Yeast).